The primary structure comprises 178 residues: UPF0302 protein BCAH187_A1683 (178 aa).

The protein belongs to the UPF0302 family.

In Bacillus cereus (strain AH187), this protein is UPF0302 protein BCAH187_A1683.